An 880-amino-acid polypeptide reads, in one-letter code: Leucine--tRNA ligase (880 aa).

Residues 46–56 (PYPSGALHMGH) carry the 'HIGH' region motif. The 'KMSKS' region motif lies at 638 to 642 (KMSKS). Lysine 641 contributes to the ATP binding site.

It belongs to the class-I aminoacyl-tRNA synthetase family.

Its subcellular location is the cytoplasm. It catalyses the reaction tRNA(Leu) + L-leucine + ATP = L-leucyl-tRNA(Leu) + AMP + diphosphate. The chain is Leucine--tRNA ligase from Xanthomonas euvesicatoria pv. vesicatoria (strain 85-10) (Xanthomonas campestris pv. vesicatoria).